Reading from the N-terminus, the 149-residue chain is D-aminoacyl-tRNA deacylase (149 aa).

The Gly-cisPro motif, important for rejection of L-amino acids signature appears at 141 to 142 (GP).

It belongs to the DTD family. Homodimer.

Its subcellular location is the cytoplasm. It catalyses the reaction glycyl-tRNA(Ala) + H2O = tRNA(Ala) + glycine + H(+). The catalysed reaction is a D-aminoacyl-tRNA + H2O = a tRNA + a D-alpha-amino acid + H(+). Its function is as follows. An aminoacyl-tRNA editing enzyme that deacylates mischarged D-aminoacyl-tRNAs. Also deacylates mischarged glycyl-tRNA(Ala), protecting cells against glycine mischarging by AlaRS. Acts via tRNA-based rather than protein-based catalysis; rejects L-amino acids rather than detecting D-amino acids in the active site. By recycling D-aminoacyl-tRNA to D-amino acids and free tRNA molecules, this enzyme counteracts the toxicity associated with the formation of D-aminoacyl-tRNA entities in vivo and helps enforce protein L-homochirality. The sequence is that of D-aminoacyl-tRNA deacylase from Streptomyces griseus subsp. griseus (strain JCM 4626 / CBS 651.72 / NBRC 13350 / KCC S-0626 / ISP 5235).